We begin with the raw amino-acid sequence, 720 residues long: Connector enhancer of kinase suppressor of ras 1 (720 aa).

Residues 7–70 (WTPGKVATWL…LGGVEQLQAL (64 aa)) form the SAM domain. The CRIC domain maps to 78–164 (NLQSLTEGLL…QVLHEDGPAA (87 aa)). One can recognise a PDZ domain in the interval 196–285 (KAVLEQVQLD…GLSLVLKKIP (90 aa)). The disordered stretch occupies residues 285-390 (PIPETPPQTP…RKKSKGLATR (106 aa)). The segment covering 304 to 317 (RSPSLSLAPLSPRA) has biased composition (low complexity). Residues Ser-307 and Ser-314 each carry the phosphoserine modification. A compositionally biased stretch (pro residues) spans 348-359 (EPLPIPPEPPAI). Over residues 379–390 (VGRKKSKGLATR) the composition is skewed to basic residues. The region spanning 403–502 (RPDCDGWLLL…WVRHLITCIS (100 aa)) is the PH domain. Residues 504-573 (YQSPGRAPPP…TSFGSLTDSS (70 aa)) form a disordered region. A compositionally biased stretch (acidic residues) spans 518–530 (CYSETEAEDPDDE). Low complexity predominate over residues 533-546 (SHSASPSPAQAGSP). The segment covering 553–571 (PAATPTQRSPRTSFGSLTD) has biased composition (polar residues). A coiled-coil region spans residues 615-646 (QLNERVHRVRALQSTLKAKLQELQVLEEVLGD). The tract at residues 676-720 (QAEGSSHILTSDSTEQSPHSLPSDPEEHSHLCPLTSESSLRPPDL) is disordered. Residues 678 to 695 (EGSSHILTSDSTEQSPHS) show a composition bias toward polar residues.

It belongs to the CNKSR family. In terms of assembly, interacts with RHO and RALGDS. Post-translationally, phosphorylated on tyrosine.

It is found in the cytoplasm. The protein localises to the membrane. In terms of biological role, may function as an adapter protein or regulator of Ras signaling pathways. The polypeptide is Connector enhancer of kinase suppressor of ras 1 (CNKSR1) (Homo sapiens (Human)).